Here is an 883-residue protein sequence, read N- to C-terminus: Alanine--tRNA ligase (883 aa).

Zn(2+) contacts are provided by His563, His567, Cys677, and His681.

This sequence belongs to the class-II aminoacyl-tRNA synthetase family. The cofactor is Zn(2+).

The protein resides in the cytoplasm. It catalyses the reaction tRNA(Ala) + L-alanine + ATP = L-alanyl-tRNA(Ala) + AMP + diphosphate. In terms of biological role, catalyzes the attachment of alanine to tRNA(Ala) in a two-step reaction: alanine is first activated by ATP to form Ala-AMP and then transferred to the acceptor end of tRNA(Ala). Also edits incorrectly charged Ser-tRNA(Ala) and Gly-tRNA(Ala) via its editing domain. This Cereibacter sphaeroides (strain ATCC 17023 / DSM 158 / JCM 6121 / CCUG 31486 / LMG 2827 / NBRC 12203 / NCIMB 8253 / ATH 2.4.1.) (Rhodobacter sphaeroides) protein is Alanine--tRNA ligase.